Consider the following 83-residue polypeptide: U5-theraphotoxin-Hs1a 6 (83 aa).

An N-terminal signal peptide occupies residues 1 to 21; it reads MKTSMFLTLTGLVLLFVVCYA. Residues 22 to 49 constitute a propeptide that is removed on maturation; the sequence is SESEEKEFPKELLSSIFAADSDFKVEER. Disulfide bonds link Cys-51–Cys-63, Cys-56–Cys-68, and Cys-62–Cys-75.

Belongs to the neurotoxin 10 (Hwtx-1) family. 51 (Hntx-8) subfamily. Hntx-8 sub-subfamily. As to expression, expressed by the venom gland.

It is found in the secreted. Functionally, agglutinates erythrocytes. This chain is U5-theraphotoxin-Hs1a 6, found in Cyriopagopus schmidti (Chinese bird spider).